Consider the following 257-residue polypeptide: tRNA pseudouridine synthase A (257 aa).

The active-site Nucleophile is the Asp-53. A substrate-binding site is contributed by Tyr-111.

It belongs to the tRNA pseudouridine synthase TruA family. In terms of assembly, homodimer.

The catalysed reaction is uridine(38/39/40) in tRNA = pseudouridine(38/39/40) in tRNA. Functionally, formation of pseudouridine at positions 38, 39 and 40 in the anticodon stem and loop of transfer RNAs. This chain is tRNA pseudouridine synthase A, found in Xylella fastidiosa (strain M12).